The sequence spans 157 residues: 2-C-methyl-D-erythritol 2,4-cyclodiphosphate synthase (157 aa).

The a divalent metal cation site is built by Asp-8 and His-10. 4-CDP-2-C-methyl-D-erythritol 2-phosphate-binding positions include 8–10 (DIH) and 35–36 (HS). His-43 lines the a divalent metal cation pocket. Residues 57–59 (DIG), 62–66 (FPNND), and Lys-142 contribute to the 4-CDP-2-C-methyl-D-erythritol 2-phosphate site.

Belongs to the IspF family. As to quaternary structure, homotrimer. The cofactor is a divalent metal cation.

The enzyme catalyses 4-CDP-2-C-methyl-D-erythritol 2-phosphate = 2-C-methyl-D-erythritol 2,4-cyclic diphosphate + CMP. It participates in isoprenoid biosynthesis; isopentenyl diphosphate biosynthesis via DXP pathway; isopentenyl diphosphate from 1-deoxy-D-xylulose 5-phosphate: step 4/6. Involved in the biosynthesis of isopentenyl diphosphate (IPP) and dimethylallyl diphosphate (DMAPP), two major building blocks of isoprenoid compounds. Catalyzes the conversion of 4-diphosphocytidyl-2-C-methyl-D-erythritol 2-phosphate (CDP-ME2P) to 2-C-methyl-D-erythritol 2,4-cyclodiphosphate (ME-CPP) with a corresponding release of cytidine 5-monophosphate (CMP). The chain is 2-C-methyl-D-erythritol 2,4-cyclodiphosphate synthase from Wigglesworthia glossinidia brevipalpis.